The following is a 296-amino-acid chain: Probable 2-(5''-triphosphoribosyl)-3'-dephosphocoenzyme-A synthase (296 aa).

This sequence belongs to the CitG/MdcB family.

The enzyme catalyses 3'-dephospho-CoA + ATP = 2'-(5''-triphospho-alpha-D-ribosyl)-3'-dephospho-CoA + adenine. The chain is Probable 2-(5''-triphosphoribosyl)-3'-dephosphocoenzyme-A synthase from Streptococcus mutans serotype c (strain ATCC 700610 / UA159).